A 394-amino-acid chain; its full sequence is Ribulose bisphosphate carboxylase large chain (394 aa).

Lys-5 is modified (N6,N6,N6-trimethyllysine). Residues Asn-114 and Thr-164 each contribute to the substrate site. Lys-166 acts as the Proton acceptor in catalysis. A substrate-binding site is contributed by Lys-168. Residues Lys-192, Asp-194, and Glu-195 each coordinate Mg(2+). At Lys-192 the chain carries N6-carboxylysine. The active-site Proton acceptor is the His-285. The substrate site is built by Arg-286, His-318, and Ser-370.

This sequence belongs to the RuBisCO large chain family. Type I subfamily. Heterohexadecamer of 8 large chains and 8 small chains. It depends on Mg(2+) as a cofactor.

It is found in the plastid. It localises to the chloroplast. The enzyme catalyses 2 (2R)-3-phosphoglycerate + 2 H(+) = D-ribulose 1,5-bisphosphate + CO2 + H2O. The catalysed reaction is D-ribulose 1,5-bisphosphate + O2 = 2-phosphoglycolate + (2R)-3-phosphoglycerate + 2 H(+). RuBisCO catalyzes two reactions: the carboxylation of D-ribulose 1,5-bisphosphate, the primary event in carbon dioxide fixation, as well as the oxidative fragmentation of the pentose substrate in the photorespiration process. Both reactions occur simultaneously and in competition at the same active site. In Victoria cruziana (Santa Cruz water lily), this protein is Ribulose bisphosphate carboxylase large chain (rbcL).